A 99-amino-acid polypeptide reads, in one-letter code: Malonate decarboxylase acyl carrier protein (99 aa).

Ser-25 carries the O-(phosphoribosyl dephospho-coenzyme A)serine modification.

Post-translationally, covalently binds the prosthetic group of malonate decarboxylase.

It is found in the cytoplasm. In terms of biological role, subunit of malonate decarboxylase, it is an acyl carrier protein to which acetyl and malonyl thioester residues are bound via a 2'-(5''-phosphoribosyl)-3'-dephospho-CoA prosthetic group and turn over during the catalytic mechanism. In Klebsiella pneumoniae, this protein is Malonate decarboxylase acyl carrier protein (mdcC).